We begin with the raw amino-acid sequence, 384 residues long: Methyl-CpG-binding domain-containing protein 10 (384 aa).

An MBD domain is found at 4 to 74 (TDELVSIELP…SEFEWTTGET (71 aa)). The interval 65-384 (SEFEWTTGET…QQGAAASVSC (320 aa)) is disordered. Polar residues predominate over residues 80 to 91 (RISQKVKATTPT). Residues 100 to 224 (KRRSSLTKKD…MEVDTSELEK (125 aa)) adopt a coiled-coil conformation. Composition is skewed to basic and acidic residues over residues 106-227 (TKKD…KKAG), 234-250 (EPSKVEGLKDTEMKEAQ), and 257-269 (DVEKKPAEEKTEN). The segment covering 270-284 (KGSVTTEANGEQNVT) has biased composition (polar residues). The span at 295–365 (EADKGKESKE…NDMKAEDTNR (71 aa)) shows a compositional bias: basic and acidic residues. A coiled-coil region spans residues 310 to 356 (TEAEANKENDTQESDEKKTEAAANKENETQESDVKKTEAAVAEEKSN). S323 carries the phosphoserine modification. A compositionally biased stretch (low complexity) spans 369-384 (ANQVQQQQGAAASVSC).

Expressed in leaves, buds, flowers, stems and siliques.

The protein resides in the nucleus. In terms of biological role, probable transcriptional regulator. Required for nucleolar dominance that consist in the silencing of rRNA genes inherited from one progenitor in genetic hybrids. The protein is Methyl-CpG-binding domain-containing protein 10 (MBD10) of Arabidopsis thaliana (Mouse-ear cress).